Consider the following 223-residue polypeptide: Carnitine transport permease protein OpuCD (223 aa).

Positions 22-202 (FWRHFLMSAY…VMAILADVLL (181 aa)) constitute an ABC transmembrane type-1 domain. 5 helical membrane-spanning segments follow: residues 27-47 (LMSA…GVYI), 63-83 (IIQT…MGLG), 87-107 (VVLS…YTGI), 148-168 (ALVI…GGLG), and 182-202 (AIIL…DVLL).

It belongs to the binding-protein-dependent transport system permease family. As to quaternary structure, the complex is composed of two ATP-binding proteins (OpuCA), two transmembrane proteins (OpuCB and OpuCD) and a solute-binding protein (OpuCC).

It is found in the cell membrane. Its function is as follows. Part of the ABC transporter complex OpuCABCD involved in carnitine uptake. Probably responsible for the translocation of the substrate across the membrane. Involved, with BetL and GbuABC, in osmoprotection and cryoprotection of Listeria. Can also mediate weak glycine betaine transport. This Listeria monocytogenes serotype 1/2a (strain 10403S) protein is Carnitine transport permease protein OpuCD (opuCD).